A 95-amino-acid chain; its full sequence is MKSNPKYFLMNDVERQSKYSPKYVPNNSLKERILEFLDYYIAPLKLYLLSYPMPDCLWDNRKLRLKASGVQVTPSSEPVHIDDRLIHISQKQPSE.

This is an uncharacterized protein from Caenorhabditis elegans.